The primary structure comprises 195 residues: PABIR family member 1 (195 aa).

Belongs to the FAM122 family.

This is PABIR family member 1 from Homo sapiens (Human).